A 1363-amino-acid chain; its full sequence is MTLEQELRQLSKAKTRAQRNGQLREEAAYCHQLGELLASHGRFKDALEEHQQELHLLESVQDTLGCAVAHRKIGERLAEMENYSAALKHQHLYLDLAGSLSNHTELQRAWATIGRTHLDIYDHCQSRDSLLQAQAAFEKSLAIVDEKLEGMLTQRELSEMRTRLYLNLGLTCESLQQTALCNNYFKKSIFLAEQNHLYEDLFRARYNLGAIHWRGGQHSQAMRCLEGARECARAMKMRFMESECCVLVSQVLQDLGDFLAAKRALKKAYRLGSQKPNQRVTVCQSLKYVLAVIQLQQQLEEAEGNDLQGAMAICEQLGDLFSKAGDFPKAAEAYQKQLHLAELLNRPDLELAVIHVSLATTLGDMKDHRKAVHHYEEELRLRKGNALEEAKTWFNIALSREEAGDAYELLAPCFQKAFCCAQQAQRFQLQRQILQHLYTVQLKLQPQEARDTEIRLQELSMAKDTEEEEEEEEEEEEEASEAPETSELELSESEDDADGLSQQLEEDEELQGCVGRRKVNKWNRRNDMGETLLHRACIEGQLRRVQDLVKQGHPLNPRDYCGWTPLHEACNYGHLEIVRFLLDHGAAVDDPGGQGCDGITPLHDALNCGHFEVAELLIERGASVTLRTRKGLSPLETLQQWVKLYFRDLDLETRQKAATMEERLQMASSGQASRSSPALQTIPSNHLFDPETSPPSSPCPEPSSYTPRPPEASPAPAKVFLEETVSAVSRPRKTRHRPTSSSSSSEDEDNPSPCRPSQKRLRHTTQQGEVKIPDPPKSRETATSSACRAAYQAAIRGVGSAQSRRLVPSLPRGSEEVPAPKTALIPEEEYLAGEWLEVDTPLTRSGRPSTSVSDYERCPARPRTRVKQSRLTSLDGWCARTQAGDGSLNAEPAENPSVPRTSGPNKENYAAGQPLLLVQPPPIRVRVQIQDNLFLIPVPQSDIRPVAWLTEQAAQRYFQTCGLLPRLTLRKDGALLAPQDPIPDVLQSNDEVLAEVTSWDLPPLKDRYRRACLSLGQGEHQQVLHAMDHQSSSPSFSACSLALCQAQLTPLLRALKLHTALRELRLAGNRLGDACATELLATLGTTPNLVLLDLSSNHLGQEGLRQLVEGSSGQAALQNLEELDLSMNPLGDGCGQALASLLRACPMLSTLRLQACGFSSSFFLSHQAALGGAFQDAVHLKTLSLSYNLLGAPALARVLQTLPACTLKRLDLSSVAASKSNSGIIEPVIKYLTKEGCALAHLTLSANCLGDKAVRELSRCLPCCPSLTSLDLSANPEVSCASLEELLSALQERSQGLSFLGLSGCSIQGPLNSDLWDKIFVQLQELQLCTKDLSTKDRDSVCQRLPEGACTMDQSSKLFFKCL.

8 TPR repeats span residues 27–60 (AAYC…LESV), 67–100 (AVAH…AGSL), 107–147 (QRAW…VDEK), 162–195 (TRLY…AEQN), 202–235 (FRAR…ARAM), 242–275 (SECC…GSQK), 311–344 (MAIC…AELL), and 352–385 (AVIH…RKGN). Residues 460 to 511 (SMAKDTEEEEEEEEEEEEEASEAPETSELELSESEDDADGLSQQLEEDEELQ) are disordered. Acidic residues predominate over residues 465–510 (TEEEEEEEEEEEEEASEAPETSELELSESEDDADGLSQQLEEDEEL). ANK repeat units follow at residues 528-557 (MGET…PLNP), 561-590 (CGWT…AVDD), and 597-626 (DGIT…SVTL). The disordered stretch occupies residues 662-786 (ERLQMASSGQ…KSRETATSSA (125 aa)). Positions 666–684 (MASSGQASRSSPALQTIPS) are enriched in polar residues. The span at 692-713 (TSPPSSPCPEPSSYTPRPPEAS) shows a compositional bias: pro residues. The segment covering 771–780 (KIPDPPKSRE) has biased composition (basic and acidic residues). At Arg796 the chain carries Omega-N-methylarginine. Disordered stretches follow at residues 841 to 866 (PLTR…RTRV) and 883 to 909 (AGDG…KENY). Residues 842–853 (LTRSGRPSTSVS) show a composition bias toward polar residues. LRR repeat units lie at residues 1060–1081 (ALRE…ELLA), 1088–1108 (NLVL…RQLV), 1119–1140 (NLEE…ALAS), 1147–1168 (MLST…SHQA), 1179–1199 (HLKT…ARVL), 1206–1214 (TLKRLDLSS), 1238–1261 (ALAH…SRCL), 1266–1287 (SLTS…EELL), 1296–1317 (GLSF…DLWD), and 1322–1343 (QLQE…SVCQ).

The protein belongs to the Tonsoku family. Component of the MMS22L-TONSL complex, a complex at least composed of MMS22L and TONSL/NFKBIL2. Interacts with the MCM complex, the FACT complex and the RPA complex. Interacts with MCM5; the interaction is direct. Binds histones, with a strong preference for histone H3.1 (histones H3.1 and H3-4/H3.1t). Interacts (via ANK repeats) with histone H4; specifically binds histone H4 lacking methylation at 'Lys-20' (H4K20me0). May interact with DNAJC9; the interaction seems to be histone-dependent.

It is found in the nucleus. The protein resides in the chromosome. The protein localises to the cytoplasm. Functionally, component of the MMS22L-TONSL complex, a complex that promotes homologous recombination-mediated repair of double-strand breaks (DSBs) at stalled or collapsed replication forks. The MMS22L-TONSL complex is required to maintain genome integrity during DNA replication. It mediates the assembly of RAD51 filaments on single-stranded DNA (ssDNA): the MMS22L-TONSL complex is recruited to DSBs following histone replacement by histone chaperones and eviction of the replication protein A complex (RPA/RP-A) from DSBs. Following recruitment to DSBs, the TONSL-MMS22L complex promotes recruitment of RAD51 filaments and subsequent homologous recombination. Within the complex, TONSL acts as a histone reader, which recognizes and binds newly synthesized histones following their replacement by histone chaperones. Specifically binds histone H4 lacking methylation at 'Lys-20' (H4K20me0) and histone H3.1. The sequence is that of Tonsoku-like protein from Mus musculus (Mouse).